The following is a 217-amino-acid chain: Probable GTP-binding protein EngB (217 aa).

The region spanning 31–205 is the EngB-type G domain; sequence VGVEIAFAGR…LAILDAWCHP (175 aa). GTP contacts are provided by residues 39–46, 66–70, 84–87, 151–154, and 184–186; these read GRSNAGKS, GRTQL, DLPG, TKAD, and FSA. Residues Ser46 and Thr68 each coordinate Mg(2+).

This sequence belongs to the TRAFAC class TrmE-Era-EngA-EngB-Septin-like GTPase superfamily. EngB GTPase family. Requires Mg(2+) as cofactor.

Necessary for normal cell division and for the maintenance of normal septation. The polypeptide is Probable GTP-binding protein EngB (Shewanella amazonensis (strain ATCC BAA-1098 / SB2B)).